We begin with the raw amino-acid sequence, 294 residues long: Potassium-transporting ATPase subunit beta (294 aa).

The Cytoplasmic portion of the chain corresponds to 1–36; the sequence is MAALQEKKSCSQRMAEFRQYCWNPDTGQMLGRTPAR. Residues 37–57 form a helical; Signal-anchor for type II membrane protein membrane-spanning segment; the sequence is WVWISLYYAAFYVVMTGLFAL. Residues 58–294 lie on the Extracellular side of the membrane; sequence CIYVLMQTID…KVEFKLTIQK (237 aa). Residues N99, N103, N130, N146, and N161 are each glycosylated (N-linked (GlcNAc...) asparagine). C131 and C152 are oxidised to a cystine. C162 and C178 are joined by a disulfide. N-linked (GlcNAc...) asparagine glycans are attached at residues N193 and N225. Residues 194-294 are immunoglobulin-like; it reads NTAPRVDCTF…KVEFKLTIQK (101 aa). Cysteines 201 and 266 form a disulfide.

This sequence belongs to the X(+)/potassium ATPases subunit beta family. In terms of assembly, the ATPase pump is composed of two subunits: alpha (catalytic) and beta (regulatory). Interacts with alpha subunit ATP12A; this interaction is required for the formation of a functionally active pump and targeting at the plasma membrane. Interacts (via N-terminus) with alpha subunit ATP4A (via the P-domain). N-glycosylation is necessary for assembly and functional expression of the pump at the plasma membrane. Stomach.

It localises to the apical cell membrane. Its subcellular location is the cell membrane. The beta subunit of the gastric H(+)/K(+) ATPase pump which transports H(+) ions in exchange for K(+) ions across the apical membrane of parietal cells. Plays a structural and regulatory role in the assembly and membrane targeting of a functionally active pump. Within a transport cycle, the transfer of a H(+) ion across the membrane is coupled to ATP hydrolysis and is associated with a transient phosphorylation of the alpha subunit that shifts the pump conformation from inward-facing (E1) to outward-facing state (E2). Interacts with the phosphorylation domain of the alpha subunit and functions as a ratchet, stabilizing the lumenal-open E2 conformation and preventing the reverse reaction of the transport cycle. The protein is Potassium-transporting ATPase subunit beta (Atp4b) of Rattus norvegicus (Rat).